We begin with the raw amino-acid sequence, 70 residues long: Large ribosomal subunit protein bL31 (70 aa).

The Zn(2+) site is built by cysteine 16, cysteine 18, cysteine 37, and cysteine 40.

Belongs to the bacterial ribosomal protein bL31 family. Type A subfamily. In terms of assembly, part of the 50S ribosomal subunit. It depends on Zn(2+) as a cofactor.

Functionally, binds the 23S rRNA. This is Large ribosomal subunit protein bL31 from Actinobacillus pleuropneumoniae serotype 5b (strain L20).